The following is a 535-amino-acid chain: Hrp65 protein (535 aa).

The interval 1-80 (MDVKAEAPNG…GMGPRGPMKN (80 aa)) is disordered. Composition is skewed to low complexity over residues 27–42 (ENMN…QNNN) and 50–64 (NKRN…FQNR). Residues 65 to 74 (GGKGGPGMGP) are compositionally biased toward gly residues. 2 RRM domains span residues 113 to 185 (NRLY…FAPN) and 187 to 268 (TTIR…TFDH). Disordered regions lie at residues 346-411 (EHET…RRQQ) and 429-535 (QEMN…RRRY). Over residues 434 to 459 (QGGGGGGGNGGNGNNQGGGGNQGGGR) the composition is skewed to gly residues. Positions 486 to 502 (GNQYQGNQHYQGNQDQG) are enriched in low complexity. Residues 521 to 535 (DRGHRDDFQNKRRRY) show a composition bias toward basic and acidic residues.

It localises to the cytoplasm. The protein resides in the cytoskeleton. The protein localises to the nucleus. Functionally, component of nuclear connecting fibers associated with the transport of ribonucleoprotein particles from either the chromosome to the nuclear pore complex or their transient retention in the nucleoplasm. This Chironomus tentans (Midge) protein is Hrp65 protein (HRP65).